We begin with the raw amino-acid sequence, 267 residues long: MSEEIVYANLKIQDPDKKEETQKSDKCGGKVSADASHSQQKTVLILILLCLLLFIGMGVLGGIFYTTLATEMIKSNQLQRAKEELQENVFLQLKHNLNSSKKIKNLSAMLQSTATQLCRELYSKEPEHKCKPCPKGSEWYKDSCYSQLNQYGTWQESVMACSARNASLLKVKNKDVLEFIKYKKLRYFWLALLPRKDRTQYPLSEKMFLSEESERSTDDIDKKYCGYIDRVNVYYTYCTDENNIICEETASKVQLESVLNGLPEDSR.

Over 1–43 (MSEEIVYANLKIQDPDKKEETQKSDKCGGKVSADASHSQQKTV) the chain is Cytoplasmic. The short motif at 5–10 (IVYANL) is the ITIM motif element. Y7 bears the Phosphotyrosine mark. A helical; Signal-anchor for type II membrane protein transmembrane segment spans residues 44 to 64 (LILILLCLLLFIGMGVLGGIF). Residues 65 to 267 (YTTLATEMIK…VLNGLPEDSR (203 aa)) lie on the Extracellular side of the membrane. Residues N98 and N105 are each glycosylated (N-linked (GlcNAc...) asparagine). Intrachain disulfides connect C118/C130, C133/C144, C161/C246, and C225/C238. Residues 140–247 (YKDSCYSQLN…CTDENNIICE (108 aa)) enclose the C-type lectin domain. Residue N165 is glycosylated (N-linked (GlcNAc...) asparagine).

As to quaternary structure, homodimer; disulfide-linked. Interacts (when the ITIM motif is phosphorylated) with PTPN6 and PTPN11. Post-translationally, phosphorylated at Tyr-7 by SRC in the ITIM motif following ligand-binding, promoting recruitment of tyrosine-protein phosphatases PTPN6 and PTPN11. Mainly expressed in lymphoid tissues. Preferentially expressed in peripheral blood leukocytes; less frequent in thymus, spleen, heart, brain and lung; and undetectable in other tissues.

Its subcellular location is the cell membrane. Its function is as follows. Myeloid inhibitory C-type lectin receptor that acts as a negative regulator of myeloid cell activation. Myeloid cell inhibition is required to limit proinflammatory pathways and protect against excessive inflammation. Specifically recognizes and binds various structures, such as neutrophil extracellular traps (NETs) or monosodium urate crystals. Also acts as a pattern-recognition receptor for pathogen-associated molecules, such as plasmodium hemozoin or mycobacterial micolic acid. Ligand-binding induces phosphorylation of its ITIM motif, followed by recruitment of tyrosine-protein phosphatases PTPN6 and PTPN11, which counteract tyrosine-protein kinase SYK, thereby preventing myeloid cell activation. Acts as a pattern-recognition receptor for NETs in neutrophils: specifically recognizes DNA in NETs, leading to inhibit neutrophil activation and limit further NET formation. This regulation is essential for controlling key neutrophil responses and limit NET-mediated inflammatory conditions. Also recognizes dead cells by acting as a receptor for monosodium urate crystals, leading to down-regulate neutrophil activation. Binding to monosodium urate crystals also promotes the type I interferon response. Acts as an inhibitor of natural killer (NK) cell cytotoxicity. Also acts as an ihibitor of dendritic cell maturation in an IL10-dependent manner. The protein is C-type lectin domain family 12 member A of Mus musculus (Mouse).